The primary structure comprises 137 residues: Small ribosomal subunit protein uS11A (137 aa).

Ser2 is modified (N-acetylserine). The tract at residues 117–137 (DVTPVPSDSTRKKGGRRGRRL) is disordered. Residues 128 to 137 (KKGGRRGRRL) show a composition bias toward basic residues.

Belongs to the universal ribosomal protein uS11 family. In terms of assembly, component of the small ribosomal subunit (SSU). Mature yeast ribosomes consist of a small (40S) and a large (60S) subunit. The 40S small subunit contains 1 molecule of ribosomal RNA (18S rRNA) and 33 different proteins (encoded by 57 genes). The large 60S subunit contains 3 rRNA molecules (25S, 5.8S and 5S rRNA) and 46 different proteins (encoded by 81 genes). uS11 interacts with eS1 forming part of the mRNA exit tunnel. uS11 interacts with snoRNA U3. uS11 interacts with MPP10. Component of the ribosomal small subunit (SSU) processome composed of at least 40 protein subunits and snoRNA U3. In terms of processing, N-terminally acetylated by acetyltransferase NatA.

The protein resides in the cytoplasm. The protein localises to the nucleus. Its subcellular location is the nucleolus. Component of the ribosome, a large ribonucleoprotein complex responsible for the synthesis of proteins in the cell. The small ribosomal subunit (SSU) binds messenger RNAs (mRNAs) and translates the encoded message by selecting cognate aminoacyl-transfer RNA (tRNA) molecules. The large subunit (LSU) contains the ribosomal catalytic site termed the peptidyl transferase center (PTC), which catalyzes the formation of peptide bonds, thereby polymerizing the amino acids delivered by tRNAs into a polypeptide chain. The nascent polypeptides leave the ribosome through a tunnel in the LSU and interact with protein factors that function in enzymatic processing, targeting, and the membrane insertion of nascent chains at the exit of the ribosomal tunnel. uS11 is involved in nucleolar processing of pre-18S ribosomal RNA and ribosome assembly. This is Small ribosomal subunit protein uS11A from Saccharomyces cerevisiae (strain ATCC 204508 / S288c) (Baker's yeast).